The primary structure comprises 552 residues: Urocanate hydratase (552 aa).

NAD(+) contacts are provided by residues 49–50 (GG), Gln-127, 173–175 (GMG), Asp-193, 239–240 (NA), 260–264 (QTSAH), 270–271 (YI), and Tyr-319. Residue Cys-407 is part of the active site. NAD(+) is bound at residue Gly-489.

The protein belongs to the urocanase family. NAD(+) is required as a cofactor.

It localises to the cytoplasm. It carries out the reaction 4-imidazolone-5-propanoate = trans-urocanate + H2O. It functions in the pathway amino-acid degradation; L-histidine degradation into L-glutamate; N-formimidoyl-L-glutamate from L-histidine: step 2/3. Functionally, catalyzes the conversion of urocanate to 4-imidazolone-5-propionate. The chain is Urocanate hydratase from Bacillus cereus (strain ATCC 14579 / DSM 31 / CCUG 7414 / JCM 2152 / NBRC 15305 / NCIMB 9373 / NCTC 2599 / NRRL B-3711).